The sequence spans 59 residues: Large ribosomal subunit protein bL32 (59 aa).

The protein belongs to the bacterial ribosomal protein bL32 family.

The chain is Large ribosomal subunit protein bL32 from Polynucleobacter necessarius subsp. necessarius (strain STIR1).